Here is a 37-residue protein sequence, read N- to C-terminus: Large ribosomal subunit protein bL36c (37 aa).

This sequence belongs to the bacterial ribosomal protein bL36 family.

Its subcellular location is the plastid. It localises to the chloroplast. This chain is Large ribosomal subunit protein bL36c, found in Chara vulgaris (Common stonewort).